Consider the following 124-residue polypeptide: Kinocilin (124 aa).

2 consecutive transmembrane segments (helical) span residues 13 to 33 and 40 to 60; these read LQLACVALGLVAGSIIIGVSV and VGGIFLGAAGLGLLIFAYPFL. Residues 80–124 form a disordered region; sequence PNSGPDHGEGRSSNNSNKEGARSGLSTVTRTLEKLKPGGRGTEEG. The segment covering 90–109 has biased composition (polar residues); the sequence is RSSNNSNKEGARSGLSTVTR. The span at 110–124 shows a compositional bias: basic and acidic residues; it reads TLEKLKPGGRGTEEG.

In terms of tissue distribution, preferentially expressed in the inner ear and testis. Localizes mainly in the kinocilium of sensory cells in the inner ear. Also present in the manchette of the spermatids, a transient structure enriched in interconnected microtubules (at protein level).

It localises to the membrane. In terms of biological role, may play a role in stabilizing dense microtubular networks or in vesicular trafficking. In Mus musculus (Mouse), this protein is Kinocilin (Kncn).